A 71-amino-acid chain; its full sequence is Exodeoxyribonuclease 7 small subunit (71 aa).

Belongs to the XseB family. In terms of assembly, heterooligomer composed of large and small subunits.

It localises to the cytoplasm. It carries out the reaction Exonucleolytic cleavage in either 5'- to 3'- or 3'- to 5'-direction to yield nucleoside 5'-phosphates.. In terms of biological role, bidirectionally degrades single-stranded DNA into large acid-insoluble oligonucleotides, which are then degraded further into small acid-soluble oligonucleotides. This is Exodeoxyribonuclease 7 small subunit from Streptococcus equi subsp. equi (strain 4047).